A 186-amino-acid polypeptide reads, in one-letter code: Threonylcarbamoyl-AMP synthase (186 aa).

The YrdC-like domain occupies 3–186 (ILSLSECVDR…IINGSLIRHG (184 aa)).

The protein belongs to the SUA5 family. TsaC subfamily.

It is found in the cytoplasm. The catalysed reaction is L-threonine + hydrogencarbonate + ATP = L-threonylcarbamoyladenylate + diphosphate + H2O. Required for the formation of a threonylcarbamoyl group on adenosine at position 37 (t(6)A37) in tRNAs that read codons beginning with adenine. Catalyzes the conversion of L-threonine, HCO(3)(-)/CO(2) and ATP to give threonylcarbamoyl-AMP (TC-AMP) as the acyladenylate intermediate, with the release of diphosphate. This Buchnera aphidicola subsp. Baizongia pistaciae (strain Bp) protein is Threonylcarbamoyl-AMP synthase.